Reading from the N-terminus, the 143-residue chain is FAD synthase (143 aa).

ATP-binding positions include 13–14, 18–21, and Asp96; these read TF and HPGH.

The protein belongs to the archaeal FAD synthase family. In terms of assembly, homodimer. Requires a divalent metal cation as cofactor.

It catalyses the reaction FMN + ATP + H(+) = FAD + diphosphate. It functions in the pathway cofactor biosynthesis; FAD biosynthesis; FAD from FMN: step 1/1. Its function is as follows. Catalyzes the transfer of the AMP portion of ATP to flavin mononucleotide (FMN) to produce flavin adenine dinucleotide (FAD) coenzyme. This is FAD synthase from Methanothrix thermoacetophila (strain DSM 6194 / JCM 14653 / NBRC 101360 / PT) (Methanosaeta thermophila).